The chain runs to 180 residues: Capsid assembly scaffolding protein (180 aa).

This sequence belongs to the SPP1-like scaffolding protein family. As to quaternary structure, homodimer.

Functionally, scaffolding protein involved in the icosahedric procapsid assembly. Coassembles with the capsid proteins to form the procapsid, in which the scaffolding protein is found within the external shell of icosahedrally arranged capsid protein subunits. In a subsequent step the scaffolding protein molecules are released from the procapsid. This is Capsid assembly scaffolding protein (g20) from Lactococcus phage mv4 (Lactococcus delbrueckii bacteriophage mv4).